The primary structure comprises 872 residues: Alanine--tRNA ligase (872 aa).

The Zn(2+) site is built by histidine 567, histidine 571, cysteine 669, and histidine 673.

It belongs to the class-II aminoacyl-tRNA synthetase family. It depends on Zn(2+) as a cofactor.

The protein resides in the cytoplasm. The catalysed reaction is tRNA(Ala) + L-alanine + ATP = L-alanyl-tRNA(Ala) + AMP + diphosphate. In terms of biological role, catalyzes the attachment of alanine to tRNA(Ala) in a two-step reaction: alanine is first activated by ATP to form Ala-AMP and then transferred to the acceptor end of tRNA(Ala). Also edits incorrectly charged Ser-tRNA(Ala) and Gly-tRNA(Ala) via its editing domain. This chain is Alanine--tRNA ligase, found in Streptococcus suis (strain 98HAH33).